We begin with the raw amino-acid sequence, 231 residues long: L-ribulose-5-phosphate 4-epimerase SgbE (231 aa).

Residues 27–28 (GN), 44–45 (SG), and 74–75 (SS) contribute to the substrate site. Asp76, His95, and His97 together coordinate Zn(2+). Asp120 serves as the catalytic Proton donor/acceptor. His171 is a binding site for Zn(2+). Tyr229 serves as the catalytic Proton donor/acceptor.

This sequence belongs to the aldolase class II family. AraD/FucA subfamily. It depends on Zn(2+) as a cofactor.

The catalysed reaction is L-ribulose 5-phosphate = D-xylulose 5-phosphate. In terms of biological role, catalyzes the interconversion of L-ribulose 5-phosphate (LRu5P) and D-xylulose 5-phosphate (D-Xu5P) via a retroaldol/aldol mechanism (carbon-carbon bond cleavage analogous to a class II aldolase reaction). May be involved in the utilization of 2,3-diketo-L-gulonate. The protein is L-ribulose-5-phosphate 4-epimerase SgbE of Haemophilus influenzae (strain ATCC 51907 / DSM 11121 / KW20 / Rd).